The primary structure comprises 540 residues: Glucose-6-phosphate isomerase (540 aa).

The active-site Proton donor is E350. Catalysis depends on residues H381 and K503.

Belongs to the GPI family.

The protein localises to the cytoplasm. The enzyme catalyses alpha-D-glucose 6-phosphate = beta-D-fructose 6-phosphate. The protein operates within carbohydrate biosynthesis; gluconeogenesis. It participates in carbohydrate degradation; glycolysis; D-glyceraldehyde 3-phosphate and glycerone phosphate from D-glucose: step 2/4. Catalyzes the reversible isomerization of glucose-6-phosphate to fructose-6-phosphate. This is Glucose-6-phosphate isomerase from Burkholderia orbicola (strain AU 1054).